The chain runs to 241 residues: Glutathione S-transferase omega-1 (241 aa).

S2 is modified (N-acetylserine). Residues G22–K101 enclose the GST N-terminal domain. The active-site Nucleophile is the C32. K57 is modified (N6-acetyllysine). Glutathione is bound by residues K59, V72, and E85–S86. The GST C-terminal domain occupies D106–L230. Residue S129 is modified to Phosphoserine. An N6-acetyllysine mark is found at K143, K148, and K152.

It belongs to the GST superfamily. Omega family. As to quaternary structure, homodimer. As to expression, ubiquitous. Highest expression in liver, pancreas, skeletal muscle, spleen, thymus, colon, blood leukocyte and heart. Lowest expression in brain, placenta and lung.

The protein resides in the cytoplasm. Its subcellular location is the cytosol. It carries out the reaction RX + glutathione = an S-substituted glutathione + a halide anion + H(+). The catalysed reaction is L-dehydroascorbate + 2 glutathione = glutathione disulfide + L-ascorbate. The enzyme catalyses methylarsonate + 2 glutathione + H(+) = methylarsonous acid + glutathione disulfide + H2O. With respect to regulation, monomethylarsonic acid reductase activity is competitively inhibited by 1-chloro 2,4-dinitrobenzene (CDNB) and by deoxycholate. Its function is as follows. Exhibits glutathione-dependent thiol transferase and dehydroascorbate reductase activities. Has S-(phenacyl)glutathione reductase activity. Also has glutathione S-transferase activity. Participates in the biotransformation of inorganic arsenic and reduces monomethylarsonic acid (MMA) and dimethylarsonic acid. The protein is Glutathione S-transferase omega-1 (GSTO1) of Homo sapiens (Human).